Reading from the N-terminus, the 247-residue chain is 14-3-3 protein gamma (247 aa).

An N-acetylmethionine; in 14-3-3 protein gamma; alternate; partial modification is found at M1. The residue at position 2 (V2) is an N-acetylvaline; in 14-3-3 protein gamma, N-terminally processed; partial. V2 carries the N-acetylvaline; partial modification. The tract at residues 2 to 166 (VDREQLVQKA…AHEISKEHMQ (165 aa)) is required for interaction with SPATA18/MIEAP (isoform 2) but dispensable for binding to SPATA18/MIEAP (isoform 1). An interaction with SPATA18/MIEAP region spans residues 2–247 (VDREQLVQKA…QDDDGGEGNN (246 aa)). S71 is subject to Phosphoserine. Y133 carries the phosphotyrosine modification. Position 145 is a phosphothreonine (T145). Phosphoserine is present on S215. The residue at position 234 (T234) is a Phosphothreonine. Position 235 is a phosphoserine (S235).

This sequence belongs to the 14-3-3 family. In terms of assembly, homodimer. Part of a complex that contains DSG3, PKP1, YAP1 and YWHAG; the complex is required for localization of DSG3 and YAP1 to the cell membrane in keratinocytes. Interacts with SAMSN1. Interacts with RAF1, SSH1 and CRTC2/TORC2. Interacts with ABL1 (phosphorylated form); the interaction retains it in the cytoplasm. Interacts with GAB2. Interacts with MDM4 (phosphorylated); negatively regulates MDM4 activity toward TP53. Interacts with PKA-phosphorylated AANAT and SIRT2. Interacts with the 'Thr-369' phosphorylated form of DAPK2. Interacts with PI4KB, TBC1D22A and TBC1D22B. Interacts with SLITRK1. Interacts with LRRK2; this interaction is dependent on LRRK2 phosphorylation. Interacts with MARK2 and MARK3. Interacts with MEFV. Interacts with ENDOG, TSC2 and PIK3C3; interaction with ENDOG weakens its interaction with TSC2 and PIK3C3. Interacts with (phosphorylated) WDR24. Interacts with BEST1; this interaction promotes L-glutamate channel activity leading to the positive regulation of NMDA glutamate receptor activity through the L-glutamate secretion. Interacts with PKP1 (when phosphorylated); the interaction results in translocation of PKP1 to the cytoplasm and loss of intercellular adhesion in keratinocytes. Interacts with SPATA18/MIEAP (isoforms 1 and 2); a protein that also plays a role in MALM. Phosphorylated by various PKC isozymes. As to expression, highly expressed in brain, skeletal muscle, and heart.

The protein localises to the cytoplasm. It localises to the cytosol. Its subcellular location is the mitochondrion matrix. Its function is as follows. Adapter protein implicated in the regulation of a large spectrum of both general and specialized signaling pathways. Binds to a large number of partners, usually by recognition of a phosphoserine or phosphothreonine motif. Binding generally results in the modulation of the activity of the binding partner. Promotes inactivation of WDR24 component of the GATOR2 complex by binding to phosphorylated WDR24. Participates in the positive regulation of NMDA glutamate receptor activity by promoting the L-glutamate secretion through interaction with BEST1. Reduces keratinocyte intercellular adhesion, via interacting with PKP1 and sequestering it in the cytoplasm, thereby reducing its incorporation into desmosomes. Plays a role in mitochondrial protein catabolic process (also named MALM) that promotes the degradation of damaged proteins inside mitochondria. This chain is 14-3-3 protein gamma, found in Homo sapiens (Human).